We begin with the raw amino-acid sequence, 86 residues long: U15-lycotoxin-Ls1g (86 aa).

The signal sequence occupies residues 1–20; it reads MNSKIFAVLLLLGLLSCVLS. Residues 21–66 form the WAP domain; it reads DQYCPKSSITACKKMNIRNDCCKDDDCTGGSWCCATPCGNFCKYPA. Intrachain disulfides connect Cys-24–Cys-54, Cys-32–Cys-58, Cys-41–Cys-53, Cys-42–Cys-80, and Cys-47–Cys-62.

This sequence belongs to the venom protein 11 family. 01 (wap-1) subfamily. Post-translationally, contains 5 disulfide bonds. In terms of tissue distribution, expressed by the venom gland.

Its subcellular location is the secreted. Functionally, has antibacterial activity. The polypeptide is U15-lycotoxin-Ls1g (Lycosa singoriensis (Wolf spider)).